The primary structure comprises 428 residues: Maltoporin 1 (428 aa).

Residues 1-25 (MTMKVKLLTTSVALALSMTAFSSNA) form the signal peptide.

This sequence belongs to the porin LamB (TC 1.B.3) family. In terms of assembly, homotrimer formed of three 18-stranded antiparallel beta-barrels, containing three independent channels.

The protein localises to the cell outer membrane. The catalysed reaction is beta-maltose(in) = beta-maltose(out). Functionally, involved in the transport of maltose and maltodextrins. This chain is Maltoporin 1, found in Aeromonas salmonicida (strain A449).